We begin with the raw amino-acid sequence, 275 residues long: 2,3,4,5-tetrahydropyridine-2,6-dicarboxylate N-succinyltransferase (275 aa).

Positions 106 and 143 each coordinate substrate.

This sequence belongs to the transferase hexapeptide repeat family. Homotrimer.

The protein localises to the cytoplasm. The catalysed reaction is (S)-2,3,4,5-tetrahydrodipicolinate + succinyl-CoA + H2O = (S)-2-succinylamino-6-oxoheptanedioate + CoA. The protein operates within amino-acid biosynthesis; L-lysine biosynthesis via DAP pathway; LL-2,6-diaminopimelate from (S)-tetrahydrodipicolinate (succinylase route): step 1/3. The chain is 2,3,4,5-tetrahydropyridine-2,6-dicarboxylate N-succinyltransferase from Burkholderia pseudomallei (strain 1106a).